Here is a 422-residue protein sequence, read N- to C-terminus: Regulator of sigma-W protease RasP (422 aa).

4 consecutive transmembrane segments (helical) span residues 6–26 (VIAF…GHLL), 175–195 (IAAG…MLGL), 346–366 (IVNL…VNLL), and 394–414 (EAFV…VVTW). His20 lines the Zn(2+) pocket. Residue Glu21 is part of the active site. Position 24 (His24) interacts with Zn(2+). The 86-residue stretch at 186–271 (AYVILVMLGL…TLHISVTPEA (86 aa)) folds into the PDZ domain.

Belongs to the peptidase M50B family. The cofactor is Zn(2+).

The protein localises to the cell membrane. In terms of biological role, is responsible for site-2 cleavage of the RsiW anti-sigma factor. This results, after a third proteolytic step catalyzed by the ClpXP protease, in the release of SigW and the transcription activation of the genes under the control of the sigma-W factor. Can also cleave liberated signal peptides of PenP and Mpr, probably within in the cell membrane. This chain is Regulator of sigma-W protease RasP, found in Bacillus subtilis (strain 168).